Consider the following 122-residue polypeptide: Large ribosomal subunit protein uL14 (122 aa).

This sequence belongs to the universal ribosomal protein uL14 family. Part of the 50S ribosomal subunit. Forms a cluster with proteins L3 and L19. In the 70S ribosome, L14 and L19 interact and together make contacts with the 16S rRNA in bridges B5 and B8.

In terms of biological role, binds to 23S rRNA. Forms part of two intersubunit bridges in the 70S ribosome. The polypeptide is Large ribosomal subunit protein uL14 (Moorella thermoacetica (strain ATCC 39073 / JCM 9320)).